A 500-amino-acid polypeptide reads, in one-letter code: Squalene epoxidase ERG1 (500 aa).

The helical transmembrane segment at 20-40 threads the bilayer; sequence EADVVVVGAGVFGCTMAFALA. FAD contacts are provided by residues 30–31, 50–51, Arg-58, Arg-145, Asp-332, and Met-345; these read VF and ER. Transmembrane regions (helical) follow at residues 450-470 and 474-494; these read AFLA…LGIF and LAII…IPIM.

The protein belongs to the squalene monooxygenase family. Requires FAD as cofactor.

It localises to the microsome membrane. The protein resides in the endoplasmic reticulum membrane. It is found in the lipid droplet. The catalysed reaction is squalene + reduced [NADPH--hemoprotein reductase] + O2 = (S)-2,3-epoxysqualene + oxidized [NADPH--hemoprotein reductase] + H2O + H(+). It functions in the pathway terpene metabolism; lanosterol biosynthesis; lanosterol from farnesyl diphosphate: step 2/3. The protein operates within steroid metabolism; ergosterol biosynthesis. In terms of biological role, squalene epoxidase; part of the third module of ergosterol biosynthesis pathway that includes the late steps of the pathway. ERG1 catalyzes the epoxidation of squalene into 2,3-epoxysqualene. The third module or late pathway involves the ergosterol synthesis itself through consecutive reactions that mainly occur in the endoplasmic reticulum (ER) membrane. Firstly, the squalene synthase ERG9 catalyzes the condensation of 2 farnesyl pyrophosphate moieties to form squalene, which is the precursor of all steroids. Squalene synthase is crucial for balancing the incorporation of farnesyl diphosphate (FPP) into sterol and nonsterol isoprene synthesis. Secondly, squalene is converted into lanosterol by the consecutive action of the squalene epoxidase ERG1 and the lanosterol synthase ERG7. Then, the delta(24)-sterol C-methyltransferase ERG6 methylates lanosterol at C-24 to produce eburicol. Eburicol is the substrate of the sterol 14-alpha demethylase encoded by CYP51A, CYP51B and CYP51C, to yield 4,4,24-trimethyl ergosta-8,14,24(28)-trienol. CYP51B encodes the enzyme primarily responsible for sterol 14-alpha-demethylation, and plays an essential role in ascospore formation. CYP51A encodes an additional sterol 14-alpha-demethylase, induced on ergosterol depletion and responsible for the intrinsic variation in azole sensitivity. The third CYP51 isoform, CYP51C, does not encode a sterol 14-alpha-demethylase, but is required for full virulence on host wheat ears. The C-14 reductase ERG24 then reduces the C14=C15 double bond which leads to 4,4-dimethylfecosterol. A sequence of further demethylations at C-4, involving the C-4 demethylation complex containing the C-4 methylsterol oxidases ERG25, the sterol-4-alpha-carboxylate 3-dehydrogenase ERG26 and the 3-keto-steroid reductase ERG27, leads to the production of fecosterol via 4-methylfecosterol. ERG28 has a role as a scaffold to help anchor ERG25, ERG26 and ERG27 to the endoplasmic reticulum. The C-8 sterol isomerase ERG2 then catalyzes the reaction which results in unsaturation at C-7 in the B ring of sterols and thus converts fecosterol to episterol. The sterol-C5-desaturases ERG3A and ERG3BB then catalyze the introduction of a C-5 double bond in the B ring to produce 5-dehydroepisterol. The C-22 sterol desaturases ERG5A and ERG5B further convert 5-dehydroepisterol into ergosta-5,7,22,24(28)-tetraen-3beta-ol by forming the C-22(23) double bond in the sterol side chain. Finally, ergosta-5,7,22,24(28)-tetraen-3beta-ol is substrate of the C-24(28) sterol reductase ERG4 to produce ergosterol. This chain is Squalene epoxidase ERG1, found in Gibberella zeae (strain ATCC MYA-4620 / CBS 123657 / FGSC 9075 / NRRL 31084 / PH-1) (Wheat head blight fungus).